A 429-amino-acid chain; its full sequence is MTETLAIRPTDAAKDSGALIADMGARARAAAVRLAGAPTADKAKALVEAAKAIRARAAAILAANAEDVARAQANGLTAAMIDRLTLDPARLEGVAAGLEAVAALPDPVGQRIDETRRPNGLLLQRVRVPLGVIGIIYESRPNVTADAGALSLMSGNACILRGGSEATASNRAIHAALLDGIRAAGLPEDAIQLVPTTDRAAVGAMLAAQGLIDIIVPRGGKSLVARVQDEARVPVLAHLDGIVHLYIDRAADPAKAVPLAVNAKMRRTGVCGATETLLIDRAYGDPATIVGALVEAGCEVRGDADARAIDDRVLPAADSDWDCEYLDSILSVAIVDGVDGAMAHIARHSSHHTDAIVTEDQPTADRFLAGVDSAIVMHNASTQFADGGEFGLGAEIGISTGRLHARGPVALEGLTTYKWLVRGEGQLRP.

This sequence belongs to the gamma-glutamyl phosphate reductase family.

It localises to the cytoplasm. The enzyme catalyses L-glutamate 5-semialdehyde + phosphate + NADP(+) = L-glutamyl 5-phosphate + NADPH + H(+). Its pathway is amino-acid biosynthesis; L-proline biosynthesis; L-glutamate 5-semialdehyde from L-glutamate: step 2/2. In terms of biological role, catalyzes the NADPH-dependent reduction of L-glutamate 5-phosphate into L-glutamate 5-semialdehyde and phosphate. The product spontaneously undergoes cyclization to form 1-pyrroline-5-carboxylate. The polypeptide is Gamma-glutamyl phosphate reductase (Rhizorhabdus wittichii (strain DSM 6014 / CCUG 31198 / JCM 15750 / NBRC 105917 / EY 4224 / RW1) (Sphingomonas wittichii)).